The chain runs to 461 residues: Proton extrusion protein PxcA (461 aa).

4 helical membrane-spanning segments follow: residues 244 to 264 (FMLL…ALIV), 339 to 359 (LKNI…VFTG), 386 to 406 (IILF…EVLV), and 421 to 441 (FINM…KYWI).

Belongs to the CemA family.

It localises to the cell inner membrane. Functionally, required for H(+) efflux immediately after light irradiation to form a rapid H(+) concentration gradient across the thylakoid membranes. Together with PxcL, contributes to transient H(+) uptake following dark to light transition. The sequence is that of Proton extrusion protein PxcA from Thermosynechococcus vestitus (strain NIES-2133 / IAM M-273 / BP-1).